The sequence spans 740 residues: Probable apyrase 7 (740 aa).

Residues 1–113 (MVFGRITELF…PSTRRKLIRA (113 aa)) are Cytoplasmic-facing. The chain crosses the membrane as a helical span at residues 114–134 (VMIVMCLFLFAFLVYIVSMYI). The Extracellular segment spans residues 135–581 (YTNWSRGASR…LKSYETLSMK (447 aa)). An N-linked (GlcNAc...) asparagine glycan is attached at Asn137. 147–157 (VVFDCGSTGTR) provides a ligand contact to ATP. The N-linked (GlcNAc...) asparagine glycan is linked to Asn208. Residue Glu284 is the Proton acceptor of the active site. 309–319 (GALDLGGSSLQ) is an ATP binding site. Residues Asn330, Asn374, Asn439, and Asn484 are each glycosylated (N-linked (GlcNAc...) asparagine). A helical transmembrane segment spans residues 582–602 (INPIALISILILSLLLLLCAL). The Cytoplasmic portion of the chain corresponds to 603–740 (SRVSNCLPRF…SLADSHMLKM (138 aa)). Positions 706–740 (FWSSPRRSQMRLQSRRSQSREDLSSSLADSHMLKM) are disordered. The segment covering 708-721 (SSPRRSQMRLQSRR) has biased composition (low complexity).

The protein belongs to the GDA1/CD39 NTPase family. Ca(2+) serves as cofactor. As to expression, detected in mature pollen grains. Also expressed in more diverse tissues such as roots, leaves, stems, pistils and sepals. More particularly expressed in the vascular bundle.

Its subcellular location is the membrane. It carries out the reaction a ribonucleoside 5'-triphosphate + 2 H2O = a ribonucleoside 5'-phosphate + 2 phosphate + 2 H(+). Catalyzes the hydrolysis of phosphoanhydride bonds of nucleoside tri- and di-phosphates. Involved in the regulation of pollen and anther development. The sequence is that of Probable apyrase 7 (APY7) from Arabidopsis thaliana (Mouse-ear cress).